A 339-amino-acid chain; its full sequence is DNA-directed RNA polymerase subunit alpha (339 aa).

The alpha N-terminal domain (alpha-NTD) stretch occupies residues 1–233 (MVREEVAGST…DLFLPFLHAE (233 aa)). The alpha C-terminal domain (alpha-CTD) stretch occupies residues 266-339 (GIPLNCIFID…IDLLKNKLSF (74 aa)).

This sequence belongs to the RNA polymerase alpha chain family. As to quaternary structure, in plastids the minimal PEP RNA polymerase catalytic core is composed of four subunits: alpha, beta, beta', and beta''. When a (nuclear-encoded) sigma factor is associated with the core the holoenzyme is formed, which can initiate transcription.

It localises to the plastid. It is found in the chloroplast. The catalysed reaction is RNA(n) + a ribonucleoside 5'-triphosphate = RNA(n+1) + diphosphate. Its function is as follows. DNA-dependent RNA polymerase catalyzes the transcription of DNA into RNA using the four ribonucleoside triphosphates as substrates. This is DNA-directed RNA polymerase subunit alpha from Psathyrostachys juncea (Russian wildrye).